A 389-amino-acid chain; its full sequence is MELSAVGERVFAAEALLKRRIRKGRMEYLVKWKGWSQKYSTWEPEENILDARLLAAFEEREREMELYGPKKRGPKPKTFLLKAQAKAKAKTYEFRSDSARGIRIPYPGRSPQDLASTSRAREGLRNMGLSPPASSTSTSSTCRAEAPRDRDRDRDRDRERDRERERERERERERERERERGTSRVDDKPSSPGDSSKKRGPKPRKELPDPSQRPLGEPSAGLGEYLKGRKLDDTPSGAGKFPAGHSVIQLARRQDSDLVQCGVTSPSSAEATGKLAVDTFPARVIKHRAAFLEAKGQGALDPNGTRVRHGSGPPSSGGGLYRDMGAQGGRPSLIARIPVARILGDPEEESWSPSLTNLEKVVVTDVTSNFLTVTIKESNTDQGFFKEKR.

In terms of domain architecture, Chromo spans 11–69; sequence FAAEALLKRRIRKGRMEYLVKWKGWSQKYSTWEPEENILDARLLAAFEEREREMELYGP. Phosphoserine occurs at positions 110 and 130. Positions 124–241 are disordered; the sequence is LRNMGLSPPA…DDTPSGAGKF (118 aa). Positions 145 to 189 are enriched in basic and acidic residues; that stretch reads EAPRDRDRDRDRDRERDRERERERERERERERERERGTSRVDDKP. Residues serine 191, serine 256, serine 265, serine 311, serine 332, and serine 352 each carry the phosphoserine modification. Residues 298 to 327 form a disordered region; the sequence is GALDPNGTRVRHGSGPPSSGGGLYRDMGAQ.

Component of a PRC1-like complex. Interacts with RING1 RNF2, PCGF1, PCGF2, PCGF3, BMI1, PCGF5 and PCGF6. Interacts with MLLT3 and histone H3. Interacts with PHC2.

The protein localises to the nucleus. Functionally, component of a Polycomb group (PcG) multiprotein PRC1-like complex, a complex class required to maintain the transcriptionally repressive state of many genes, including Hox genes, throughout development. PcG PRC1 complex acts via chromatin remodeling and modification of histones; it mediates monoubiquitination of histone H2A 'Lys-119', rendering chromatin heritably changed in its expressibility. The sequence is that of Chromobox protein homolog 8 (CBX8) from Homo sapiens (Human).